The chain runs to 86 residues: MNISKPEQRTLHALARGGRIDIEKDDDRRIIEVDCITREGWRLLDCDMTTFRKLRSKRLIASENGGPYRITRKGLAAVRPQPDNRS.

Belongs to the UPF0386 family.

In Rhodospirillum centenum (strain ATCC 51521 / SW), this protein is UPF0386 protein RC1_1783.